The chain runs to 323 residues: Thymidylate synthase (323 aa).

DUMP contacts are provided by residues Arg-21 and 172 to 173; that span reads RR. Cys-192 serves as the catalytic Nucleophile. Residues 214 to 217, Asn-225, and 255 to 257 contribute to the dUMP site; these read RSND and HVY. Position 217 (Asp-217) interacts with (6R)-5,10-methylene-5,6,7,8-tetrahydrofolate. Ala-322 contributes to the (6R)-5,10-methylene-5,6,7,8-tetrahydrofolate binding site.

Belongs to the thymidylate synthase family. Bacterial-type ThyA subfamily. Homodimer.

It localises to the cytoplasm. It catalyses the reaction dUMP + (6R)-5,10-methylene-5,6,7,8-tetrahydrofolate = 7,8-dihydrofolate + dTMP. Its pathway is pyrimidine metabolism; dTTP biosynthesis. Its function is as follows. Catalyzes the reductive methylation of 2'-deoxyuridine-5'-monophosphate (dUMP) to 2'-deoxythymidine-5'-monophosphate (dTMP) while utilizing 5,10-methylenetetrahydrofolate (mTHF) as the methyl donor and reductant in the reaction, yielding dihydrofolate (DHF) as a by-product. This enzymatic reaction provides an intracellular de novo source of dTMP, an essential precursor for DNA biosynthesis. The sequence is that of Thymidylate synthase from Pseudomonas syringae pv. tomato (strain ATCC BAA-871 / DC3000).